Reading from the N-terminus, the 267-residue chain is Pre-protein VI (267 aa).

A propeptide spanning residues 1–33 (MEDINFASLAPRHGSRPFMGTWNEIGTSQLNGG) is cleaved from the precursor. The interval 34–54 (AFSWSSLWSGIKNFGSSIKSF) is amphipathic alpha-helix essential for membrane lytic activity. Residues 36–53 (SWSSLWSGIKNFGSSIKS) are involved in endosomal membrane lysis. Residues 48–74 (GSSIKSFGNKAWNSNTGQMLRDKLKDQ) are interaction with hexon protein. The Nuclear export signal motif lies at 67–76 (LRDKLKDQNF). Disordered regions lie at residues 107 to 184 (LENS…PMTK) and 199 to 230 (KPVTLELPPPVPTVPPMPAPTLGTAVSRPTAP). Composition is skewed to basic and acidic residues over residues 123 to 135 (PKVEEVEVEEKLP) and 146 to 155 (KGEKRPRPDL). The Nuclear localization signal signature appears at 149–153 (KRPRP). A PPXY motif motif is present at residues 166–169 (PPSY). The segment covering 205–217 (LPPPVPTVPPMPA) has biased composition (pro residues). Low complexity predominate over residues 218–230 (PTLGTAVSRPTAP). Positions 248–259 (STLNSIVGLGVK) match the Nuclear export signal motif. Residues 250–256 (LNSIVGL) are interaction with hexon protein. The tract at residues 257-267 (GVKSLKRRRCY) is binds to importin alpha/beta, involved in hexon nuclear import. A Nuclear localization signal motif is present at residues 262–265 (KRRR).

Belongs to the adenoviridae protein VI family. Interacts with hexon protein; this interaction allows nuclear import of hexon trimers and possibly pre-capsid assembly. Interacts (via C-terminal NLS) with importin alpha/beta. In terms of assembly, interacts (via PPxY motif) with host NEDD4 ubiquitine ligase; this interaction might play a role in virus intracellular transport during entry. Part of a complex composed of the core-capsid bridging protein, the endosome lysis protein VI and the hexon-linking protein VIII; these interactions bridge the virus core to the capsid. Interacts with peripentonal hexons; this interaction stabilizes the capsid by gluing two peripentonal hexons together and joining them with an adjacent group-of-nine hexon. As to quaternary structure, heterodimer with the viral protease; disulfide-linked. Interacts with the viral protease. Post-translationally, ubiquitinated by Nedd4 following partial capsid disassembly; which might play a role in intracellular virus movement during entry. In terms of processing, contains the major nuclear import and export signals. Proteolytically removed during virion maturation. The processing of the C-terminus turns the precursor into a mature viral structural protein and abrogates its ability to promote hexon import and act as a potential chaperone protein.

It localises to the host nucleus. The protein resides in the host cytoplasm. Its subcellular location is the virion. During virus assembly, promotes hexon trimers nuclear import through nuclear pore complexes via an importin alpha/beta-dependent mechanism. By analogy to herpesviruses capsid assembly, might act as a chaperone to promote the formation of the icosahedral capsid. Its function is as follows. Structural component of the virion that provides increased stability to the particle shell through its interaction with the core-capsid bridging protein and the hexon-linking protein VIII. Fibers shedding during virus entry into host cell allows the endosome lysis protein to be exposed as a membrane-lytic peptide. Exhibits pH-independent membrane fragmentation activity and probably mediates viral rapid escape from host endosome via organellar membrane lysis. It is not clear if it then remains partially associated with the capsid and involved in the intracellular microtubule-dependent transport of capsid to the nucleus, or if it is lost during endosomal penetration. Functionally, cofactor that activates the viral protease. Binds to viral protease in a 1:1 ratio. The polypeptide is Pre-protein VI (Homo sapiens (Human)).